A 293-amino-acid chain; its full sequence is Lysosomal amino acid transporter 1 homolog (293 aa).

The Lumenal segment spans residues 1–37; the sequence is MVWRTLGASNFSTCPNGSVQWIWDVFGECAQDGWDEA. N-linked (GlcNAc...) asparagine glycans are attached at residues asparagine 10 and asparagine 16. The PQ-loop 1 domain occupies 34–100; sequence WDEASVGLGL…LADQLPLQTY (67 aa). Residues 38–58 traverse the membrane as a helical segment; sequence SVGLGLVSILCFAASTFPQYI. At 59 to 71 the chain is on the cytoplasmic side; that stretch reads KACKTGNMDQALS. The chain crosses the membrane as a helical span at residues 72-92; sequence LWFLLGWIGGDSCNLIGSFLA. Topologically, residues 93–96 are lumenal; it reads DQLP. Residues 97-117 form a helical membrane-spanning segment; sequence LQTYTAVYYVLADLMMLTLYF. Topologically, residues 118 to 127 are cytoplasmic; the sequence is HYKFKKRPSP. Residues 128–148 traverse the membrane as a helical segment; the sequence is LSAPINSVLLFILGTVCITPL. Over 149–182 the chain is Lumenal; that stretch reads LSSTDPVAVPREGFRGRTLLSVEPGNKPFTKKEV. The chain crosses the membrane as a helical span at residues 183–203; that stretch reads IGFVIGSASSLLYLLSRLPQI. The 53-residue stretch at 191–243 folds into the PQ-loop 2 domain; sequence SSLLYLLSRLPQIRTNFIRQSTQGISYSLFALVMLGNTLYGLSVLLKNPEVGQ. The Cytoplasmic portion of the chain corresponds to 204-214; it reads RTNFIRQSTQG. The helical transmembrane segment at 215-235 threads the bilayer; that stretch reads ISYSLFALVMLGNTLYGLSVL. The Lumenal segment spans residues 236–254; it reads LKNPEVGQSEGSYLLHHLP. A helical membrane pass occupies residues 255–275; it reads WLVGSLGVLLLDTIISIQFLV. Residues 276 to 293 lie on the Cytoplasmic side of the membrane; the sequence is YRSHETAAASEREPLLPS. The short motif at 290 to 291 is the Di-leucine motif element; that stretch reads LL.

This sequence belongs to the laat-1 family. As to expression, ubiquitously expressed.

The protein localises to the lysosome membrane. Its function is as follows. Amino acid transporter that specifically mediates the pH-dependent export of the cationic amino acids arginine, histidine and lysine from lysosomes. The sequence is that of Lysosomal amino acid transporter 1 homolog from Mus musculus (Mouse).